We begin with the raw amino-acid sequence, 485 residues long: UDP-glycosyltransferase 71B2 (485 aa).

Residues serine 287, 354 to 356 (APQ), 371 to 379 (HCGWNSTLE), and 393 to 396 (YAEQ) contribute to the UDP-alpha-D-glucose site.

It belongs to the UDP-glycosyltransferase family.

Its function is as follows. Glucosyltransferase that glucosylates the cell wall inhibitor hypostatin in vivo to form a bioactive glucoside. This Arabidopsis thaliana (Mouse-ear cress) protein is UDP-glycosyltransferase 71B2 (UGT71B2).